Reading from the N-terminus, the 164-residue chain is NADPH-dependent 7-cyano-7-deazaguanine reductase (164 aa).

Cysteine 55 serves as the catalytic Thioimide intermediate. Catalysis depends on aspartate 62, which acts as the Proton donor. Residues 77-79 (VES) and 96-97 (HE) contribute to the substrate site.

Belongs to the GTP cyclohydrolase I family. QueF type 1 subfamily.

It localises to the cytoplasm. It carries out the reaction 7-aminomethyl-7-carbaguanine + 2 NADP(+) = 7-cyano-7-deazaguanine + 2 NADPH + 3 H(+). Its pathway is tRNA modification; tRNA-queuosine biosynthesis. Catalyzes the NADPH-dependent reduction of 7-cyano-7-deazaguanine (preQ0) to 7-aminomethyl-7-deazaguanine (preQ1). In Bacillus velezensis (strain DSM 23117 / BGSC 10A6 / LMG 26770 / FZB42) (Bacillus amyloliquefaciens subsp. plantarum), this protein is NADPH-dependent 7-cyano-7-deazaguanine reductase.